A 41-amino-acid polypeptide reads, in one-letter code: Large ribosomal subunit protein bL36 (41 aa).

The protein belongs to the bacterial ribosomal protein bL36 family.

The chain is Large ribosomal subunit protein bL36 from Bartonella quintana (strain Toulouse) (Rochalimaea quintana).